Here is a 320-residue protein sequence, read N- to C-terminus: Undecaprenyl-diphosphatase (320 aa).

The next 8 membrane-spanning stretches (helical) occupy residues 9–29 (FVLISAVSAALSVVLFPLEVF), 82–102 (GVAFTAIIQLGSIAAVLWYFW), 130–150 (LGIVLGTIPIVFFGLLIKTFI), 161–181 (LGAIAVASIVMSLLLGVGEKL), 191–211 (LTMQDGLLMGLAQALTLIPGV), 236–256 (FLLGIPAITLAGLVELKDLLA), 265–285 (LPLIMGVISAAIFSYLAIAGL), and 296–316 (VFIWYRLVFGVAILGAISAGI).

This sequence belongs to the UppP family.

It localises to the cell inner membrane. It carries out the reaction di-trans,octa-cis-undecaprenyl diphosphate + H2O = di-trans,octa-cis-undecaprenyl phosphate + phosphate + H(+). Its function is as follows. Catalyzes the dephosphorylation of undecaprenyl diphosphate (UPP). Confers resistance to bacitracin. This is Undecaprenyl-diphosphatase from Nostoc sp. (strain PCC 7120 / SAG 25.82 / UTEX 2576).